The following is a 337-amino-acid chain: Glyceraldehyde-3-phosphate dehydrogenase, cytosolic (337 aa).

The binding to NAD stretch occupies residues 1-151 (MAKVKVGING…YKSDLNIVSN (151 aa)). Residues 13–14 (RI), aspartate 35, and arginine 82 contribute to the NAD(+) site. The segment at 152 to 337 (ASCTTNCLAP…DLIMHISKCQ (186 aa)) is catalytic. D-glyceraldehyde 3-phosphate is bound by residues 153–155 (SCT), threonine 184, 213–214 (TG), and arginine 236. The Nucleophile role is filled by cysteine 154. Asparagine 318 is an NAD(+) binding site.

It belongs to the glyceraldehyde-3-phosphate dehydrogenase family. In terms of assembly, homotetramer.

The protein resides in the cytoplasm. It catalyses the reaction D-glyceraldehyde 3-phosphate + phosphate + NAD(+) = (2R)-3-phospho-glyceroyl phosphate + NADH + H(+). The protein operates within carbohydrate degradation; glycolysis; pyruvate from D-glyceraldehyde 3-phosphate: step 1/5. In terms of biological role, key enzyme in glycolysis that catalyzes the first step of the pathway by converting D-glyceraldehyde 3-phosphate (G3P) into 3-phospho-D-glyceroyl phosphate. Essential for the maintenance of cellular ATP levels and carbohydrate metabolism. The chain is Glyceraldehyde-3-phosphate dehydrogenase, cytosolic (GAPC) from Mesembryanthemum crystallinum (Common ice plant).